The following is a 344-amino-acid chain: WW domain binding protein 1-like (344 aa).

Residues 42-62 form a helical membrane-spanning segment; that stretch reads LWWFWLVWTIIIILSCCCVCH. Disordered regions lie at residues 132–250 and 302–321; these read LLPP…RFTG and CLSSEGQAREHGHPHLPRPP. The span at 145 to 173 shows a compositional bias: low complexity; sequence PGADQPQGSQGAQSSPLSGPSRSSTRPPS. A Phosphoserine modification is found at Ser-173. Positions 212–228 are enriched in basic and acidic residues; sequence LDRDSECKEELLKDSSS.

The protein localises to the membrane. This Rattus norvegicus (Rat) protein is WW domain binding protein 1-like (Wbp1l).